Reading from the N-terminus, the 520-residue chain is Retinoic acid receptor RXR-beta (520 aa).

Residues 1–167 (MSWATRPPFL…GGSGPPEDVK (167 aa)) form a disordered region. The interval 1-191 (MSWATRPPFL…PGGPGAGKRL (191 aa)) is modulating. Residue Arg25 is modified to Omega-N-methylarginine. Basic and acidic residues predominate over residues 64–79 (EAGRDGMGDSGRDSRS). The span at 95 to 118 (SSPPGPPLTPSAPPPPMPPPPLGS) shows a compositional bias: pro residues. Residues 119 to 130 (PFPVISSSMGSP) show a composition bias toward low complexity. The segment covering 131–140 (GLPPPAPPGF) has biased composition (pro residues). 2 NR C4-type zinc fingers span residues 192–212 (CAIC…CEGC) and 228–252 (CRDN…YQKC). The segment at residues 192–257 (CAICGDRSSG…RYQKCLATGM (66 aa)) is a DNA-binding region (nuclear receptor). Residues 258 to 382 (KREAVQEERQ…HRSIDVRDGI (125 aa)) form a hinge region. The span at 263 to 275 (QEERQRGKDKDGD) shows a compositional bias: basic and acidic residues. Disordered stretches follow at residues 263–285 (QEER…APEE) and 300–323 (QKSD…NDPV). The region spanning 283 to 516 (PEEMPVDRIL…TFLMEMLEAP (234 aa)) is the NR LBD domain. Gly residues predominate over residues 307–317 (EGPGATGGGGS).

The protein belongs to the nuclear hormone receptor family. NR2 subfamily. Homodimer (in vitro). Heterodimer with other retinoic acid receptor family members. Binds DNA preferentially as a RAR/RXR heterodimer. Interacts with NR1H3. Interacts with AKAP13. As to expression, in all tissues tested, including brain, thymus, spleen and liver.

It is found in the nucleus. The protein localises to the cytoplasm. In terms of biological role, receptor for retinoic acid. Retinoic acid receptors bind as heterodimers to their target response elements in response to their ligands, all-trans or 9-cis retinoic acid, and regulate gene expression in various biological processes. The RAR/RXR heterodimers bind to the retinoic acid response elements (RARE). In Mus musculus (Mouse), this protein is Retinoic acid receptor RXR-beta (Rxrb).